The following is a 161-amino-acid chain: N5-carboxyaminoimidazole ribonucleotide mutase (161 aa).

3 residues coordinate substrate: Ser-9, Asp-12, and Arg-39.

Belongs to the AIR carboxylase family. Class I subfamily.

It carries out the reaction 5-carboxyamino-1-(5-phospho-D-ribosyl)imidazole + H(+) = 5-amino-1-(5-phospho-D-ribosyl)imidazole-4-carboxylate. Its pathway is purine metabolism; IMP biosynthesis via de novo pathway; 5-amino-1-(5-phospho-D-ribosyl)imidazole-4-carboxylate from 5-amino-1-(5-phospho-D-ribosyl)imidazole (N5-CAIR route): step 2/2. In terms of biological role, catalyzes the conversion of N5-carboxyaminoimidazole ribonucleotide (N5-CAIR) to 4-carboxy-5-aminoimidazole ribonucleotide (CAIR). This is N5-carboxyaminoimidazole ribonucleotide mutase from Vibrio parahaemolyticus serotype O3:K6 (strain RIMD 2210633).